The primary structure comprises 1061 residues: Ribonuclease 3 (1061 aa).

2 disordered regions span residues 1-20 (MDFT…QIHQ) and 149-244 (PLHS…SYNE). Over residues 156-173 (KTPERKENEEDSDSEIRS) the composition is skewed to basic and acidic residues. 2 RNase III domains span residues 586–759 (LSVF…LDSG) and 811–935 (FHRL…VDKG). Residues Glu851, Asp921, and Glu924 each coordinate Mg(2+). The DRBM domain occupies 962–1037 (DAKSHLQQWC…AENALAALEK (76 aa)).

It belongs to the ribonuclease III family. The cofactor is Mg(2+). It depends on Mn(2+) as a cofactor.

Its subcellular location is the nucleus. It catalyses the reaction Endonucleolytic cleavage to 5'-phosphomonoester.. In terms of biological role, executes the initial step of microRNA (miRNA) processing in the nucleus, that is the cleavage of pri-miRNA to release pre-miRNA. Involved in pre-rRNA processing. Cleaves double-strand RNA and does not cleave single-strand RNA. Involved in fertility. Required for the function or synthesis of the let-7 miRNA. The polypeptide is Ribonuclease 3 (Caenorhabditis briggsae).